Reading from the N-terminus, the 181-residue chain is Insulin-like growth factor 2 (181 aa).

The first 24 residues, 1–24, serve as a signal peptide directing secretion; that stretch reads MGIPMRKPLLVLLVFLALASCCYA. A b region spans residues 25–52; sequence AYRPSETLCGGELVDTLQFVCGDRGFYF. Cystine bridges form between Cys-33–Cys-71, Cys-45–Cys-84, and Cys-70–Cys-75. A c region spans residues 53 to 64; sequence SRPASRVNRRSR. The tract at residues 65–85 is a; sequence GIVEECCFRSCDLALLETYCA. Residues 86–91 form a d region; the sequence is TPAKSE. A propeptide spans 92–181 (e peptide); that stretch reads RDVSTPPTVL…ASPEASGHRK (90 aa). A disordered region spans residues 151–181; it reads EAKRHRPLTARPTRDPAAHGGASPEASGHRK. Residue Thr-163 is glycosylated (O-linked (GalNAc...) threonine).

The protein belongs to the insulin family. In terms of assembly, interacts with MYORG; this interaction is required for IGF2 secretion. Interacts with integrins ITGAV:ITGB3 and ITGA6:ITGB4; integrin-binding is required for IGF2 signaling. Interacts with IGFBP2. Post-translationally, proteolytically processed by PCSK4, proIGF2 is cleaved at Arg-128 and Arg-92 to generate big-IGF2 and mature IGF2.

It is found in the secreted. Its function is as follows. The insulin-like growth factors possess growth-promoting activity. Major fetal growth hormone in mammals. Plays a key role in regulating fetoplacental development. IGF2 is influenced by placental lactogen. Also involved in tissue differentiation. In adults, involved in glucose metabolism in adipose tissue, skeletal muscle and liver. Acts as a ligand for integrin which is required for IGF2 signaling. Positively regulates myogenic transcription factor MYOD1 function by facilitating the recruitment of transcriptional coactivators, thereby controlling muscle terminal differentiation. Inhibits myoblast differentiation and modulates metabolism via increasing the mitochondrial respiration rate. Preptin undergoes glucose-mediated co-secretion with insulin, and acts as a physiological amplifier of glucose-mediated insulin secretion. Exhibits osteogenic properties by increasing osteoblast mitogenic activity through phosphoactivation of MAPK1 and MAPK3. The sequence is that of Insulin-like growth factor 2 from Sus scrofa (Pig).